Reading from the N-terminus, the 408-residue chain is uncharacterized protein (408 aa).

Disordered regions lie at residues 184 to 206 (DENNNNSNNNNNNNSNNNSSILF) and 254 to 317 (NNKT…SSDS). Low complexity predominate over residues 187 to 206 (NNNSNNNNNNNSNNNSSILF).

This is an uncharacterized protein from Dictyostelium discoideum (Social amoeba).